The primary structure comprises 112 residues: Protein lin-52 homolog (112 aa).

It belongs to the lin-52 family. In terms of assembly, component of the DREAM complex.

This chain is Protein lin-52 homolog (lin52), found in Danio rerio (Zebrafish).